The chain runs to 1193 residues: Nucleolar protein 6 (1193 aa).

Disordered regions lie at residues 1 to 69 (MRFV…TKNV) and 1137 to 1193 (KREQ…KVLK). Basic and acidic residues-rich tracts occupy residues 31 to 46 (AGDH…KIAK) and 1151 to 1161 (DANKAEEESKP). The residue at position 35 (Ser35) is a Phosphoserine. Over residues 1162-1184 (KPKKHRQRKGTGKKALPKRKRLI) the composition is skewed to basic residues.

The protein belongs to the NRAP family. Part of the small subunit (SSU) processome, composed of more than 70 proteins and the RNA chaperone small nucleolar RNA (snoRNA) U3. As to expression, expressed in nurse cells at stages 9-10 of oogenesis and exported to the oocyte.

The protein resides in the nucleus. The protein localises to the nucleolus. It localises to the chromosome. Functionally, part of the small subunit (SSU) processome, first precursor of the small eukaryotic ribosomal subunit. During the assembly of the SSU processome in the nucleolus, many ribosome biogenesis factors, an RNA chaperone and ribosomal proteins associate with the nascent pre-rRNA and work in concert to generate RNA folding, modifications, rearrangements and cleavage as well as targeted degradation of pre-ribosomal RNA by the RNA exosome. The polypeptide is Nucleolar protein 6 (Drosophila melanogaster (Fruit fly)).